The chain runs to 447 residues: Tubulin beta-1 chain (447 aa).

8 residues coordinate GTP: Gln-11, Glu-69, Ser-138, Gly-142, Thr-143, Gly-144, Asn-204, and Asn-226. Glu-69 is a binding site for Mg(2+). A disordered region spans residues 424 to 447 (QYQDATAEEEGEGDEEEAEGEAAA). Acidic residues predominate over residues 429-447 (TAEEEGEGDEEEAEGEAAA).

Belongs to the tubulin family. In terms of assembly, dimer of alpha and beta chains. A typical microtubule is a hollow water-filled tube with an outer diameter of 25 nm and an inner diameter of 15 nM. Alpha-beta heterodimers associate head-to-tail to form protofilaments running lengthwise along the microtubule wall with the beta-tubulin subunit facing the microtubule plus end conferring a structural polarity. Microtubules usually have 13 protofilaments but different protofilament numbers can be found in some organisms and specialized cells. Mg(2+) serves as cofactor.

The protein resides in the cytoplasm. It is found in the cytoskeleton. Its function is as follows. Tubulin is the major constituent of microtubules, a cylinder consisting of laterally associated linear protofilaments composed of alpha- and beta-tubulin heterodimers. Microtubules grow by the addition of GTP-tubulin dimers to the microtubule end, where a stabilizing cap forms. Below the cap, tubulin dimers are in GDP-bound state, owing to GTPase activity of alpha-tubulin. The chain is Tubulin beta-1 chain (TUBB1) from Cyanophora paradoxa.